Reading from the N-terminus, the 316-residue chain is Beta-ketoacyl-[acyl-carrier-protein] synthase III (316 aa).

Residues Cys-112 and His-243 contribute to the active site. Residues 244–248 (QANIR) form an ACP-binding region. Asn-273 is an active-site residue.

Belongs to the thiolase-like superfamily. FabH family. As to quaternary structure, homodimer.

Its subcellular location is the cytoplasm. The catalysed reaction is malonyl-[ACP] + acetyl-CoA + H(+) = 3-oxobutanoyl-[ACP] + CO2 + CoA. Its pathway is lipid metabolism; fatty acid biosynthesis. Catalyzes the condensation reaction of fatty acid synthesis by the addition to an acyl acceptor of two carbons from malonyl-ACP. Catalyzes the first condensation reaction which initiates fatty acid synthesis and may therefore play a role in governing the total rate of fatty acid production. Possesses both acetoacetyl-ACP synthase and acetyl transacylase activities. Its substrate specificity determines the biosynthesis of branched-chain and/or straight-chain of fatty acids. The polypeptide is Beta-ketoacyl-[acyl-carrier-protein] synthase III (Haemophilus ducreyi (strain 35000HP / ATCC 700724)).